A 204-amino-acid polypeptide reads, in one-letter code: UPF0134 protein MPN_655 (204 aa).

Residues 46–132 (EVENKPKIPI…FNEFKDSNNQ (87 aa)) form a disordered region. The span at 64–80 (SPKPLKPPKPPKPPKGP) shows a compositional bias: pro residues. The span at 117 to 132 (YVTRKEFNEFKDSNNQ) shows a compositional bias: basic and acidic residues.

This sequence belongs to the UPF0134 family.

In Mycoplasma pneumoniae (strain ATCC 29342 / M129 / Subtype 1) (Mycoplasmoides pneumoniae), this protein is UPF0134 protein MPN_655.